The sequence spans 1650 residues: Phosphatidylinositol 3,4,5-trisphosphate-dependent Rac exchanger 1 protein (1650 aa).

Residues 1-19 (MEAPGSGGGDGGGDPGGDG) show a composition bias toward gly residues. The interval 1-33 (MEAPGSGGGDGGGDPGGDGAHPDARGPVSGPCA) is disordered. Positions 44–235 (LRLCVLNEIL…KTVCSNINET (192 aa)) constitute a DH domain. In terms of domain architecture, PH spans 266–387 (ELLLQGNLLK…WLDALIRERE (122 aa)). A Phosphoserine modification is found at Ser314. 2 consecutive DEP domains span residues 416 to 491 (MSKK…RFRY) and 518 to 592 (SLYA…RFHA). One can recognise a PDZ domain in the interval 620 to 698 (RLLIPPQEDD…SRRPLRLLVA (79 aa)). The segment at 793-813 (ARASQGAPDEDPQEDDQPDSA) is disordered. Residues 800–810 (PDEDPQEDDQP) are compositionally biased toward acidic residues. Position 991 is a phosphoserine (Ser991). Disordered stretches follow at residues 1022–1047 (SPAV…GAPS) and 1099–1129 (PTSA…EVDR). Residues 1030 to 1047 (QGQGLNDSSYGSASGAPS) are compositionally biased toward polar residues. Residues 1109–1122 (PSLVEETSSSPPVS) show a composition bias toward low complexity. Ser1186 and Ser1191 each carry phosphoserine.

Interacts preferentially with RAC2. Interacts with RAC1. Interacts with AUTS2.

It localises to the cytoplasm. The protein localises to the cytosol. The protein resides in the cell membrane. Functionally, functions as a RAC guanine nucleotide exchange factor (GEF), which activates the Rac proteins by exchanging bound GDP for free GTP. Its activity is synergistically activated by phosphatidylinositol 3,4,5-trisphosphate and the beta gamma subunits of heterotrimeric G protein. May function downstream of heterotrimeric G proteins in neutrophils. The sequence is that of Phosphatidylinositol 3,4,5-trisphosphate-dependent Rac exchanger 1 protein (Prex1) from Mus musculus (Mouse).